A 554-amino-acid polypeptide reads, in one-letter code: CTP synthase (554 aa).

Residues 1–265 are amidoligase domain; that stretch reads MTPLIFVTGG…DEIVVNQLKL (265 aa). CTP is bound at residue serine 13. Serine 13 is a binding site for UTP. 14–19 contributes to the ATP binding site; it reads SLGKGI. Positions 71 and 139 each coordinate Mg(2+). Residues 146 to 148, 186 to 191, and lysine 222 each bind CTP; these read DIE and KTKPTQ. UTP contacts are provided by residues 186-191 and lysine 222; that span reads KTKPTQ. Residues 292-545 form the Glutamine amidotransferase type-1 domain; sequence TIAVVGKYVD…IRAARERKAG (254 aa). Residue glycine 353 participates in L-glutamine binding. Catalysis depends on cysteine 380, which acts as the Nucleophile; for glutamine hydrolysis. Residues 381 to 384, glutamate 404, and arginine 471 each bind L-glutamine; that span reads YGMQ. Residues histidine 518 and glutamate 520 contribute to the active site.

Belongs to the CTP synthase family. As to quaternary structure, homotetramer.

It carries out the reaction UTP + L-glutamine + ATP + H2O = CTP + L-glutamate + ADP + phosphate + 2 H(+). It catalyses the reaction L-glutamine + H2O = L-glutamate + NH4(+). The catalysed reaction is UTP + NH4(+) + ATP = CTP + ADP + phosphate + 2 H(+). It participates in pyrimidine metabolism; CTP biosynthesis via de novo pathway; CTP from UDP: step 2/2. Its activity is regulated as follows. Allosterically activated by GTP, when glutamine is the substrate; GTP has no effect on the reaction when ammonia is the substrate. The allosteric effector GTP functions by stabilizing the protein conformation that binds the tetrahedral intermediate(s) formed during glutamine hydrolysis. Inhibited by the product CTP, via allosteric rather than competitive inhibition. Functionally, catalyzes the ATP-dependent amination of UTP to CTP with either L-glutamine or ammonia as the source of nitrogen. Regulates intracellular CTP levels through interactions with the four ribonucleotide triphosphates. The polypeptide is CTP synthase (Stenotrophomonas maltophilia (strain K279a)).